Reading from the N-terminus, the 655-residue chain is NACHT, LRR and PYD domains-containing protein 10 (655 aa).

The Pyrin domain occupies 1–96 (MAMAKARKPR…VDQLSHICLH (96 aa)). One can recognise an NACHT domain in the interval 167-484 (SLVVLQGSAG…AMSYLVKEDQ (318 aa)). 173 to 180 (GSAGTGKT) serves as a coordination point for ATP. Residues 597 to 609 (QSQNLFSVKSSLS) are compositionally biased toward polar residues. The tract at residues 597-655 (QSQNLFSVKSSLSHGPKEEQKCPSVHGQKEGKDNIAGTQKEASTGKGRGTEETPKNTYI) is disordered. 2 stretches are compositionally biased toward basic and acidic residues: residues 611–629 (GPKE…EGKD) and 644–655 (RGTEETPKNTYI).

The protein belongs to the NLRP family. In terms of assembly, oligomerizes. Interacts with PYCARD. Also interacts with CASP1 and IL1B. Interacts with NOD1 and components of the NOD1 signaling pathway including RIPK2, NR2C2/TAK1 and IKBKG/NEMO. Highly expressed in basal and suprabasal epidermal cell layers with lower levels in dermal fibroblast cells (at protein level). Widely expressed with highest levels in heart, brain and skeletal muscle. Also expressed in liver, colon, dermis and epidermis. Little expression detected in myeloid cells or peripheral blood mononuclear cells.

The protein resides in the cytoplasm. Its subcellular location is the cell membrane. Inhibits autoprocessing of CASP1, CASP1-dependent IL1B secretion, PYCARD aggregation and PYCARD-mediated apoptosis but not apoptosis induced by FAS or BID. Displays anti-inflammatory activity. Required for immunity against C.albicans infection. Involved in the innate immune response by contributing to pro-inflammatory cytokine release in response to invasive bacterial infection. Contributes to T-cell-mediated inflammatory responses in the skin. Plays a role in protection against periodontitis through its involvement in induction of IL1A via ERK activation in oral epithelial cells infected with periodontal pathogens. Exhibits both ATPase and GTPase activities. The chain is NACHT, LRR and PYD domains-containing protein 10 (NLRP10) from Homo sapiens (Human).